Reading from the N-terminus, the 328-residue chain is E3 ubiquitin-protein ligase RING1-like (328 aa).

At serine 2 the chain carries N-acetylserine. The RING-type; atypical zinc finger occupies 216–257; it reads CAVCMDEFEDGSDVKQMPCKHVFHQDCLLPWLELHNSCPVCR. A disordered region spans residues 264-328; it reads DPDYENRSQG…NLETRGEDLD (65 aa). Positions 306 to 319 are enriched in gly residues; the sequence is SGSGSGAPGTGGGN.

In terms of processing, auto-ubiquitinated as part of the enzymatic reaction. In terms of tissue distribution, expressed in leaves, roots, trichomes, stipules, and also in anthers and stigma of flowers.

It carries out the reaction S-ubiquitinyl-[E2 ubiquitin-conjugating enzyme]-L-cysteine + [acceptor protein]-L-lysine = [E2 ubiquitin-conjugating enzyme]-L-cysteine + N(6)-ubiquitinyl-[acceptor protein]-L-lysine.. It functions in the pathway protein modification; protein ubiquitination. In terms of biological role, E3 ubiquitin-protein ligase which accepts ubiquitin from an E2 ubiquitin-conjugating enzyme in the form of a thioester and then directly transfers the ubiquitin to targeted substrates. Promotes polyubiquitination of target proteins. The sequence is that of E3 ubiquitin-protein ligase RING1-like from Arabidopsis thaliana (Mouse-ear cress).